A 2293-amino-acid chain; its full sequence is G-protein coupled receptor 179 (2293 aa).

The first 27 residues, 1 to 27 (MGARAVVISSLAWGLLSCCFLCSGALG), serve as a signal peptide directing secretion. The cache-like region stretch occupies residues 62–245 (FLYSGDVQRL…CHEGQLRPGW (184 aa)). Asn75 carries an N-linked (GlcNAc...) asparagine glycan. Cys76 and Cys236 form a disulfide bridge. Asn298 carries N-linked (GlcNAc...) asparagine glycosylation. Transmembrane regions (helical) follow at residues 383–403 (AVLA…LVAY), 416–436 (IVLL…VFIL), 445–465 (CVAL…TIIL), 494–514 (LGQL…GALE), 544–564 (YIMV…CYAT), 585–602 (LLLS…VPSL), and 608–628 (LLLF…LIFI). Cys445 and Cys537 are oxidised to a cystine. N-linked (GlcNAc...) asparagine glycosylation occurs at Asn661. The segment at 733–812 (QHSRDSGSLG…GRESLADGPP (80 aa)) is disordered. Over residues 738-759 (SGSLGLGSLPGSSRRRLLSSSL) the composition is skewed to low complexity. Residues 773–782 (STYDHHREHN) show a composition bias toward basic and acidic residues. N-linked (GlcNAc...) asparagine glycosylation is present at Asn823. Disordered regions lie at residues 872–935 (EERK…HPPI), 1046–1235 (GTGE…NPAL), 1275–1294 (ERTE…LSRS), 1326–1345 (EAVC…QLVH), 1388–1411 (GTST…ATFW), 1479–1560 (ELAG…HGGS), 1578–1770 (ATLS…VCPW), 1792–1828 (TVGK…TSKG), 1844–1882 (WKPP…KGEL), 1924–2051 (SSSH…GSEK), and 2212–2293 (FLPE…WDCE). The segment covering 1080 to 1089 (LKTPLQQGSV) has biased composition (polar residues). Composition is skewed to basic and acidic residues over residues 1105–1123 (TYKE…KGKP), 1173–1186 (CQKE…DRNK), and 1275–1286 (ERTEGGSLEKKP). Basic and acidic residues-rich tracts occupy residues 1546–1555 (ASSKAGEKLL) and 1597–1632 (RTSE…RIQK). The span at 1644–1663 (PGSTPQRDTEKAQASLQRQG) shows a compositional bias: polar residues. Basic and acidic residues-rich tracts occupy residues 1682–1698 (GEER…RPND) and 1717–1728 (KKSERLGSEKEV). Over residues 1737 to 1747 (PGDSSQQPDTP) the composition is skewed to polar residues. 3 stretches are compositionally biased toward basic and acidic residues: residues 1748-1761 (NTEK…EHGS), 1796-1813 (GLER…RQNL), and 1872-1882 (ASDRASEKGEL). Residues 1937–1948 (RVSSQPLVSTGD) are compositionally biased toward polar residues. Positions 1979-2007 (TETEMSRQDEKEKSQEEKERAPETRDHEG) are enriched in basic and acidic residues. Residues 2283–2293 (SPPPDYPWDCE) are compositionally biased toward pro residues.

This sequence belongs to the G-protein coupled receptor 3 family. As to quaternary structure, homodimer. Associates with the R7 group RGS-GNB5 complexes, composed of an R7 group RGS subunit (RGS6, RGS7, RGS9 or RGS11) and GNB5, promoting their localization to the cell membrane and regulating the GTPase activator activity of R7 RGS proteins. Interacts with TRPM1. Interacts with GRM6. Interacts with EGFLAM; transsynaptic interaction is required for synaptic organization of photoreceptor cells.

The protein resides in the cell membrane. It localises to the postsynaptic cell membrane. Its subcellular location is the cell projection. The protein localises to the dendrite. Functionally, orphan receptor involved in vision. Required for signal transduction through retinal depolarizing bipolar cells. Acts as an atypical G-protein coupled receptor that recruits and regulates the R7 group RGS-GNB5 complexes instead of activating G proteins: promotes the GTPase activator activity of R7 RGS proteins, increasing the GTPase activity of G protein alpha subunits, thereby driving them into their inactive GDP-bound form. Associates with components of metabotropic signaling cascade in retina ON-bipolar neurons, such as TRPM1 and GRM6: may control the ability of the GRM6 cascade to gate TRPM1. This Mus musculus (Mouse) protein is G-protein coupled receptor 179.